An 83-amino-acid chain; its full sequence is Large ribosomal subunit protein eL43 (83 aa).

Zn(2+) contacts are provided by Cys38, Cys41, Cys56, and Cys59. The segment at 38–59 (CPVCGRRAVRRISTGIWQCKKC) adopts a C4-type zinc-finger fold.

It belongs to the eukaryotic ribosomal protein eL43 family. Putative zinc-binding subfamily. Part of the 50S ribosomal subunit. The cofactor is Zn(2+).

Its function is as follows. Binds to the 23S rRNA. The chain is Large ribosomal subunit protein eL43 from Pyrococcus abyssi (strain GE5 / Orsay).